The chain runs to 153 residues: uncharacterized protein (153 aa).

The segment at 19–46 (EKSTRLEEDAMESEPLAGTKTRGRGRRR) is disordered.

This is an uncharacterized protein from Homo sapiens (Human).